A 388-amino-acid chain; its full sequence is MLEGSWINRREDKLGVYSLVHFSPKMLGSVATTLPLSSSNSSGMPLGYYLSSPQISRVTISTTGQLTSKATVGSCSRVENSLDASPFSVPKKQDESPMIGDGEDYFLSLFGDSKKLTAHSNYTQKTLKYFSMILEEVGQFTSSSLGDVEIAEVNVKGLFVKLINSSLDKEMAIGDHILQQNVNGQTISLYRFLPNIVMQANSTVTVWAAASEAKHQPPSDFLWKEQDKFRASPDCITILCKPNGQAIAWYTPIHWKQAWEKLDADVEFNRCSVVSPTFRKRVFQWTASTATITKEKQDQPKKDISNYQVEQAQVLLKREKEIPPTVFPNRSPWCQNPYVSAHPYCPLIEPHNTSTAGGRLDRQPRTRSTRPNRASGSKKKKTSESQKQ.

An LTD domain is found at 136 to 254; it reads EVGQFTSSSL…QAIAWYTPIH (119 aa). Residues 349–388 form a disordered region; sequence EPHNTSTAGGRLDRQPRTRSTRPNRASGSKKKKTSESQKQ. The span at 365-381 shows a compositional bias: basic residues; sequence RTRSTRPNRASGSKKKK.

Belongs to the intermediate filament family.

In Homo sapiens (Human), this protein is Lamin tail domain-containing protein 1 (LMNTD1).